Here is an 82-residue protein sequence, read N- to C-terminus: MNEFQTESFVSLKPYDLVKVNRGAYVGSLEARASDPIPPAYIFEGPGTLITTAGQYSLVRWHLIPAPDVWLATAQLEAYSED.

Belongs to the complex I NdhO subunit family. NDH-1 can be composed of about 15 different subunits; different subcomplexes with different compositions have been identified which probably have different functions.

It is found in the plastid. It localises to the organellar chromatophore thylakoid membrane. It carries out the reaction a plastoquinone + NADH + (n+1) H(+)(in) = a plastoquinol + NAD(+) + n H(+)(out). The enzyme catalyses a plastoquinone + NADPH + (n+1) H(+)(in) = a plastoquinol + NADP(+) + n H(+)(out). Functionally, NDH-1 shuttles electrons from an unknown electron donor, via FMN and iron-sulfur (Fe-S) centers, to quinones in the respiratory and/or the photosynthetic chain. The immediate electron acceptor for the enzyme in this species is believed to be plastoquinone. Couples the redox reaction to proton translocation, and thus conserves the redox energy in a proton gradient. Cyanobacterial NDH-1 also plays a role in inorganic carbon-concentration. The chain is NAD(P)H-quinone oxidoreductase subunit O, organellar chromatophore from Paulinella chromatophora.